We begin with the raw amino-acid sequence, 411 residues long: LL-diaminopimelate aminotransferase (411 aa).

2 residues coordinate substrate: Tyr15 and Gly42. Residues Tyr72, 108-109, Tyr132, Asn187, Tyr218, and 246-248 each bind pyridoxal 5'-phosphate; these read SK and SFS. Residues Lys109, Tyr132, and Asn187 each contribute to the substrate site. Lys249 carries the N6-(pyridoxal phosphate)lysine modification. Pyridoxal 5'-phosphate contacts are provided by Arg257 and Asn292. 2 residues coordinate substrate: Asn292 and Arg388.

It belongs to the class-I pyridoxal-phosphate-dependent aminotransferase family. LL-diaminopimelate aminotransferase subfamily. In terms of assembly, homodimer. The cofactor is pyridoxal 5'-phosphate.

It catalyses the reaction (2S,6S)-2,6-diaminopimelate + 2-oxoglutarate = (S)-2,3,4,5-tetrahydrodipicolinate + L-glutamate + H2O + H(+). It functions in the pathway amino-acid biosynthesis; L-lysine biosynthesis via DAP pathway; LL-2,6-diaminopimelate from (S)-tetrahydrodipicolinate (aminotransferase route): step 1/1. In terms of biological role, involved in the synthesis of meso-diaminopimelate (m-DAP or DL-DAP), required for both lysine and peptidoglycan biosynthesis. Catalyzes the direct conversion of tetrahydrodipicolinate to LL-diaminopimelate. In Geobacter sp. (strain M21), this protein is LL-diaminopimelate aminotransferase.